The primary structure comprises 235 residues: Sugar fermentation stimulation protein homolog (235 aa).

The protein belongs to the SfsA family.

The protein is Sugar fermentation stimulation protein homolog of Bartonella henselae (strain ATCC 49882 / DSM 28221 / CCUG 30454 / Houston 1) (Rochalimaea henselae).